A 406-amino-acid polypeptide reads, in one-letter code: uncharacterized protein (406 aa).

5 helical membrane passes run 7 to 27, 31 to 51, 65 to 85, 92 to 112, and 191 to 211; these read LCTN…YYLF, YFNI…YGSV, LIFI…SEII, IFYF…SFIL, and ISLI…SSFF. Residues 259-331 form a disordered region; it reads TLNVPISTNN…TGTNNNVVDN (73 aa). Positions 262–291 are enriched in polar residues; the sequence is VPISTNNTDNLNSVKTNQQFNTPVAKSNTK. Basic residues predominate over residues 292–303; it reads SNRRKKTGKKIR. Positions 306–318 are enriched in low complexity; sequence NQTTSSNSSNNQS. Polar residues predominate over residues 319–330; the sequence is PESTGTNNNVVD.

It is found in the membrane. This is an uncharacterized protein from Acanthamoeba polyphaga (Amoeba).